The primary structure comprises 64 residues: Disintegrin VB7A (64 aa).

Residues 1 to 64 (NSGNPCCDPV…SDCPRNPYKD (64 aa)) enclose the Disintegrin domain. Cystine bridges form between Cys-6–Cys-29, Cys-20–Cys-26, Cys-25–Cys-50, and Cys-38–Cys-57. The Cell attachment site motif lies at 42-44 (RGD).

Belongs to the disintegrin family. Dimeric disintegrin subfamily. Heterodimer with VB7B; disulfide-linked. Expressed by the venom gland.

It localises to the secreted. Its function is as follows. Poor inhibitor of platelet aggregation. The disintegrin inhibits the adhesion of cells expressing the RGD-dependent integrin alpha-5/beta-1 (ITGA5/ITGB1) to immobilized fibronectin. Inhibition on alpha-2b/beta-3 (ITGA2B/ITGB3) is low. The sequence is that of Disintegrin VB7A from Vipera berus berus (Common viper).